The following is a 647-amino-acid chain: Probable potassium transport system protein Kup (647 aa).

Helical transmembrane passes span 32–52 (IALM…SPLY), 74–94 (VISM…VLFV), 124–144 (LLII…AIIT), 166–186 (FVLP…KTGT), 193–213 (FGPI…HQVI), 230–250 (FLIE…LVLT), 271–291 (WFFI…AMFL), 300–320 (PFFL…ATAA), 322–342 (VIAS…AILL), 361–381 (IYMP…VLAF), 390–410 (AYGI…AIVM), 418–438 (TILV…FLTA), and 443–463 (IMEG…FLMT).

It belongs to the HAK/KUP transporter (TC 2.A.72) family.

Its subcellular location is the cell inner membrane. It catalyses the reaction K(+)(in) + H(+)(in) = K(+)(out) + H(+)(out). Transport of potassium into the cell. Likely operates as a K(+):H(+) symporter. The protein is Probable potassium transport system protein Kup of Polynucleobacter asymbioticus (strain DSM 18221 / CIP 109841 / QLW-P1DMWA-1) (Polynucleobacter necessarius subsp. asymbioticus).